We begin with the raw amino-acid sequence, 111 residues long: BET1-like protein (111 aa).

At 1–86 the chain is on the cytoplasmic side; it reads MADWARAQSP…MARSGRDNRK (86 aa). Residues serine 9 and serine 37 each carry the phosphoserine modification. The region spanning 15 to 77 is the t-SNARE coiled-coil homology domain; the sequence is EILDRENKRM…TGSVKRFSTM (63 aa). The helical; Anchor for type IV membrane protein transmembrane segment at 87–107 threads the bilayer; the sequence is LLCGVAVGLIVAFFILSYLLS. Over 108–111 the chain is Lumenal; sequence RART.

In terms of assembly, component of a SNARE complex consisting of STX5, YKT6, GOSR1 and BET1L. Interacts with STX5.

It localises to the golgi apparatus membrane. The protein localises to the golgi apparatus. Its subcellular location is the trans-Golgi network membrane. Its function is as follows. Vesicle SNARE required for targeting and fusion of retrograde transport vesicles with the Golgi complex. Required for the integrity of the Golgi complex. In Bos taurus (Bovine), this protein is BET1-like protein.